A 119-amino-acid chain; its full sequence is Ghilanten (119 aa).

Residue glutamine 1 is modified to Pyrrolidone carboxylic acid. Disulfide bonds link cysteine 8–cysteine 19, cysteine 13–cysteine 26, cysteine 28–cysteine 48, cysteine 33–cysteine 51, cysteine 37–cysteine 53, cysteine 62–cysteine 73, cysteine 67–cysteine 80, cysteine 82–cysteine 103, cysteine 88–cysteine 106, and cysteine 92–cysteine 108. The region spanning 28-53 (CPEVRCRVYCSHGFQRSRYGCEVCRC) is the Antistasin-like 1 domain. One can recognise an Antistasin-like 2 domain in the interval 83-108 (KIDINCRKTCPNGLKRDKLGCEYCEC). Heparin is bound by residues 97–100 (KRDK) and 111–118 (KRKLVPRL).

This sequence belongs to the protease inhibitor I15 (antistasin) family.

The protein resides in the secreted. Functionally, this highly disulfide-bonded protein is a potent inhibitor of factor Xa. May have therapeutic utility as an anticoagulant. Also exhibits a strong metastatic activity. The polypeptide is Ghilanten (Haementeria ghilianii (Amazon leech)).